An 829-amino-acid chain; its full sequence is Transmembrane protease serine 7 (829 aa).

The Cytoplasmic segment spans residues 1-62 (MDKEKSDPSC…RAPFWNVQNK (62 aa)). The segment at 26–52 (SVPGKLPGRRPPRKPIGKPRPRKQPKK) is disordered. A compositionally biased stretch (basic residues) spans 32 to 52 (PGRRPPRKPIGKPRPRKQPKK). Residues 63-83 (IILFTVFLFILAVTAWTLLWL) traverse the membrane as a helical; Signal-anchor for type II membrane protein segment. Over 84–829 (YISKTESKDA…WIHKYVPSLL (746 aa)) the chain is Extracellular. Positions 92 to 220 (DAFYFVGMFR…DSVVLNAGLR (129 aa)) constitute an SEA domain. Intrachain disulfides connect Cys233/Cys259, Cys285/Cys308, and Cys351/Cys382. 2 CUB domains span residues 233–346 (CSRY…FEVI) and 351–467 (CEST…YNIS). 2 N-linked (GlcNAc...) asparagine glycosylation sites follow: Asn401 and Asn465. 3 LDL-receptor class A domains span residues 469–505 (PCPA…LFCV), 503–540 (FCVT…QNCT), and 544–581 (PCTS…EGCG). 9 cysteine pairs are disulfide-bonded: Cys470/Cys482, Cys477/Cys495, Cys489/Cys504, Cys511/Cys530, Cys524/Cys539, Cys545/Cys557, Cys552/Cys571, Cys565/Cys580, and Cys617/Cys633. One can recognise a Peptidase S1 domain in the interval 592 to 826 (IVGGSDSQEG…FVPWIHKYVP (235 aa)). Catalysis depends on charge relay system residues His632 and Asp680. 3 disulfides stabilise this stretch: Cys716–Cys782, Cys748–Cys761, and Cys772–Cys802. Ser776 functions as the Charge relay system in the catalytic mechanism.

Belongs to the peptidase S1 family. As to quaternary structure, forms a heterodimer with SERPINA5. Post-translationally, N-glycosylated. Expressed in brain, eye, testis, skin, epididymis and salivary gland with lower levels in heart, skeletal muscle, thymus, ovary, prostate and uterus.

The protein localises to the cell membrane. In terms of biological role, serine protease which preferentially hydrolyzes peptides with Arg at the P1 position. The sequence is that of Transmembrane protease serine 7 (Tmprss7) from Mus musculus (Mouse).